A 375-amino-acid polypeptide reads, in one-letter code: Queuine tRNA-ribosyltransferase (375 aa).

Aspartate 90 (proton acceptor) is an active-site residue. Residues aspartate 90 to phenylalanine 94, aspartate 144, glutamine 190, and glycine 217 each bind substrate. The interval glycine 248 to tyrosine 254 is RNA binding. The Nucleophile role is filled by aspartate 267. Positions threonine 272 to arginine 276 are RNA binding; important for wobble base 34 recognition. Zn(2+) contacts are provided by cysteine 305, cysteine 307, cysteine 310, and histidine 336.

Belongs to the queuine tRNA-ribosyltransferase family. Homodimer. Within each dimer, one monomer is responsible for RNA recognition and catalysis, while the other monomer binds to the replacement base PreQ1. Zn(2+) is required as a cofactor.

The catalysed reaction is 7-aminomethyl-7-carbaguanine + guanosine(34) in tRNA = 7-aminomethyl-7-carbaguanosine(34) in tRNA + guanine. It participates in tRNA modification; tRNA-queuosine biosynthesis. Its function is as follows. Catalyzes the base-exchange of a guanine (G) residue with the queuine precursor 7-aminomethyl-7-deazaguanine (PreQ1) at position 34 (anticodon wobble position) in tRNAs with GU(N) anticodons (tRNA-Asp, -Asn, -His and -Tyr). Catalysis occurs through a double-displacement mechanism. The nucleophile active site attacks the C1' of nucleotide 34 to detach the guanine base from the RNA, forming a covalent enzyme-RNA intermediate. The proton acceptor active site deprotonates the incoming PreQ1, allowing a nucleophilic attack on the C1' of the ribose to form the product. After dissociation, two additional enzymatic reactions on the tRNA convert PreQ1 to queuine (Q), resulting in the hypermodified nucleoside queuosine (7-(((4,5-cis-dihydroxy-2-cyclopenten-1-yl)amino)methyl)-7-deazaguanosine). The polypeptide is Queuine tRNA-ribosyltransferase (Borrelia recurrentis (strain A1)).